The primary structure comprises 168 residues: Ribosome maturation factor RimM (168 aa).

A PRC barrel domain is found at 92–166; the sequence is EDTFYKADLI…RITVDPIEGM (75 aa).

This sequence belongs to the RimM family. Binds ribosomal protein uS19.

It localises to the cytoplasm. Its function is as follows. An accessory protein needed during the final step in the assembly of 30S ribosomal subunit, possibly for assembly of the head region. Essential for efficient processing of 16S rRNA. May be needed both before and after RbfA during the maturation of 16S rRNA. It has affinity for free ribosomal 30S subunits but not for 70S ribosomes. The protein is Ribosome maturation factor RimM of Alkaliphilus metalliredigens (strain QYMF).